A 376-amino-acid polypeptide reads, in one-letter code: WW domain-binding protein 4 (376 aa).

The segment at Lys-11–Lys-42 adopts a Matrin-type zinc-finger fold. The segment covering Ile-94–Ser-107 has biased composition (low complexity). Disordered stretches follow at residues Ile-94 to Trp-128, Ser-189 to Val-335, and Phe-356 to Gln-376. WW domains are found at residues Asp-122–Gly-155 and Thr-163–Asp-196. Basic and acidic residues predominate over residues Ser-189–Ile-198. The span at Asp-203–Gly-215 shows a compositional bias: polar residues. Composition is skewed to basic and acidic residues over residues Asp-218–Ser-229 and Glu-243–Asn-257. Phosphoserine is present on residues Ser-220, Ser-227, and Ser-229. At Ser-262 the chain carries Phosphoserine. Positions Gln-298–Glu-309 are enriched in basic and acidic residues. The segment covering Ser-316–Glu-326 has biased composition (polar residues). The interaction with SNRNP200 stretch occupies residues Lys-357–Asp-375. Positions Thr-361 to Gln-376 are enriched in basic and acidic residues.

As to quaternary structure, component of the spliceosome B complex. Associated with U2 snRNPs. Binds splicing factors SNRPB, SNRPC and SF1. Interacts via the WW domains with the Pro-rich domains of KHDRBS1/SAM68. Interacts via the WW domains with the Pro-rich domains of WBP11. Interacts with SNRNP200.

It is found in the nucleus. Its subcellular location is the nucleus speckle. Its function is as follows. Involved in pre-mRNA splicing as a component of the spliceosome. May play a role in cross-intron bridging of U1 and U2 snRNPs in the mammalian A complex. The sequence is that of WW domain-binding protein 4 (WBP4) from Homo sapiens (Human).